A 284-amino-acid chain; its full sequence is Bifunctional protein FolD (284 aa).

NADP(+)-binding positions include 166–168 (GAS) and Ile232.

The protein belongs to the tetrahydrofolate dehydrogenase/cyclohydrolase family. Homodimer.

It catalyses the reaction (6R)-5,10-methylene-5,6,7,8-tetrahydrofolate + NADP(+) = (6R)-5,10-methenyltetrahydrofolate + NADPH. The enzyme catalyses (6R)-5,10-methenyltetrahydrofolate + H2O = (6R)-10-formyltetrahydrofolate + H(+). It participates in one-carbon metabolism; tetrahydrofolate interconversion. In terms of biological role, catalyzes the oxidation of 5,10-methylenetetrahydrofolate to 5,10-methenyltetrahydrofolate and then the hydrolysis of 5,10-methenyltetrahydrofolate to 10-formyltetrahydrofolate. This chain is Bifunctional protein FolD, found in Pseudomonas fluorescens (strain ATCC BAA-477 / NRRL B-23932 / Pf-5).